The sequence spans 222 residues: Peptide methionine sulfoxide reductase MsrA 1 (222 aa).

Cys57 is a catalytic residue.

This sequence belongs to the MsrA Met sulfoxide reductase family.

It carries out the reaction L-methionyl-[protein] + [thioredoxin]-disulfide + H2O = L-methionyl-(S)-S-oxide-[protein] + [thioredoxin]-dithiol. The enzyme catalyses [thioredoxin]-disulfide + L-methionine + H2O = L-methionine (S)-S-oxide + [thioredoxin]-dithiol. Has an important function as a repair enzyme for proteins that have been inactivated by oxidation. Catalyzes the reversible oxidation-reduction of methionine sulfoxide in proteins to methionine. This Synechocystis sp. (strain ATCC 27184 / PCC 6803 / Kazusa) protein is Peptide methionine sulfoxide reductase MsrA 1 (msrA1).